The chain runs to 349 residues: Putative transport protein YhhT (349 aa).

Topologically, residues 1–10 are cytoplasmic; sequence METPQPDKTG. Residues 11-31 traverse the membrane as a helical segment; the sequence is MHILLKLASLVVILAGIHAAA. Aspartate 32 is a topological domain (periplasmic). Residues 33 to 53 form a helical membrane-spanning segment; that stretch reads IIVQLLLALFFAIVLNPLVTW. Over 54–62 the chain is Cytoplasmic; that stretch reads FIRRGVQRP. Residues 63-83 form a helical membrane-spanning segment; that stretch reads VAITIVVVVMLIALTALVGVL. Topologically, residues 84–142 are periplasmic; that stretch reads AASFNEFISMLPKFNKELTRKLFKLQEMLPFLNLHMSPERMLQRMDSEKVVTFTTALMT. The helical transmembrane segment at 143–163 threads the bilayer; that stretch reads GLSGAMASVLLLVMTVVFMLF. Residues 164–208 are Cytoplasmic-facing; the sequence is EVRHVPYKMRFALNNPQIHIAGLHRALKGVSHYLALKTLLSLWTG. Residues 209–229 form a helical membrane-spanning segment; that stretch reads VIVWLGLELMGVQFALMWAVL. Residues 230-234 lie on the Periplasmic side of the membrane; the sequence is AFLLN. A helical transmembrane segment spans residues 235–255; that stretch reads YVPNIGAVISAVPPMIQVLLF. Residues 256-257 are Cytoplasmic-facing; the sequence is NG. Residues 258–278 traverse the membrane as a helical segment; sequence VYECILVGALFLVVHMVIGNI. Residues 279–292 are Periplasmic-facing; it reads LEPRMMGHRLGMST. Residues 293–313 traverse the membrane as a helical segment; it reads MVVFLSLLIWGWLLGPVGMLL. At 314–349 the chain is on the cytoplasmic side; the sequence is SVPLTSVCKIWMETTKGGSKLAILLGPGRPKSRLPG.

Belongs to the autoinducer-2 exporter (AI-2E) (TC 2.A.86) family.

The protein localises to the cell inner membrane. The sequence is that of Putative transport protein YhhT (yhhT) from Escherichia coli O157:H7.